A 154-amino-acid chain; its full sequence is UPF0178 protein H16_B0290 (154 aa).

The protein belongs to the UPF0178 family.

The sequence is that of UPF0178 protein H16_B0290 from Cupriavidus necator (strain ATCC 17699 / DSM 428 / KCTC 22496 / NCIMB 10442 / H16 / Stanier 337) (Ralstonia eutropha).